The primary structure comprises 1147 residues: Putative ATP-dependent RNA helicase L377 (1147 aa).

A Helicase ATP-binding domain is found at 108–315; sequence INPNTPYRGL…VELINYLRPK (208 aa). Residue 121-128 participates in ATP binding; that stretch reads WGTGVGKS. The short motif at 264–267 is the DEAH box element; that stretch reads DEAH.

Belongs to the DEAD box helicase family. DEAH subfamily.

The protein localises to the virion. It carries out the reaction ATP + H2O = ADP + phosphate + H(+). The polypeptide is Putative ATP-dependent RNA helicase L377 (Acanthamoeba polyphaga (Amoeba)).